The sequence spans 235 residues: Urease accessory protein UreF (235 aa).

This sequence belongs to the UreF family. UreD, UreF and UreG form a complex that acts as a GTP-hydrolysis-dependent molecular chaperone, activating the urease apoprotein by helping to assemble the nickel containing metallocenter of UreC. The UreE protein probably delivers the nickel.

The protein resides in the cytoplasm. Its function is as follows. Required for maturation of urease via the functional incorporation of the urease nickel metallocenter. The polypeptide is Urease accessory protein UreF (Haemophilus influenzae (strain PittGG)).